The primary structure comprises 1084 residues: Siderophore biosynthesis regulatory protein URBS1 (1084 aa).

Disordered regions lie at residues 1–164, 245–283, and 300–337; these read MALP…QSSS, AEEH…RDSY, and RPVH…AGMR. Low complexity predominate over residues 23 to 51; it reads QAAAASSSSSSSSSHHPPPRIAARPIAPA. Polar residues-rich tracts occupy residues 97–106 and 128–141; these read SHHNASSTAT and RSQS…NRSQ. The segment covering 150-164 has biased composition (low complexity); that stretch reads PSRSQPNSPLLQSSS. The span at 245–260 shows a compositional bias: basic and acidic residues; the sequence is AEEHAKMQRYSDEHPR. Residues 338 to 362 form a GATA-type 1 zinc finger; it reads CSNCGVTSTPLWRRAPDGSTICNAC. 2 disordered regions span residues 372–405 and 442–472; these read HRSA…REDD and VSKR…KMDD. The segment covering 373–385 has biased composition (polar residues); the sequence is RSASNRLSGSDAS. The segment at 482–506 adopts a GATA-type 2 zinc-finger fold; that stretch reads CTNCQTTTTPLWRRDEDGNNICNAC. Disordered stretches follow at residues 559–595, 643–679, 692–803, 841–940, 953–1019, and 1040–1084; these read IAPA…MREA, RAGA…DERD, THAA…TKLS, EAAG…SRRN, AAVP…DDHW, and ARPV…APRT. Basic and acidic residues-rich tracts occupy residues 650–659 and 715–725; these read RTSHPDDSRS and RLGRSELHGES. The span at 752–781 shows a compositional bias: basic residues; the sequence is PHHHHHHHHHHANHASHAVHHGHHHHHHHP. Basic and acidic residues predominate over residues 875-888; the sequence is RGTRSGHDSIKQEA. Residues 961-970 are compositionally biased toward polar residues; sequence SPPSTVSNPA. Residues 1070-1084 show a composition bias toward low complexity; that stretch reads PVASSPSQAVSAPRT.

The protein localises to the nucleus. Its function is as follows. Involved in the regulation of secreted ferrichrome-type siderophores. Acts directly or indirectly to repress the biosynthesis of siderophores. The polypeptide is Siderophore biosynthesis regulatory protein URBS1 (URBS1) (Mycosarcoma maydis (Corn smut fungus)).